The primary structure comprises 258 residues: Ribosomal RNA small subunit methyltransferase A (258 aa).

Positions 13, 15, 41, 63, 87, and 106 each coordinate S-adenosyl-L-methionine.

It belongs to the class I-like SAM-binding methyltransferase superfamily. rRNA adenine N(6)-methyltransferase family. RsmA subfamily.

It is found in the cytoplasm. It carries out the reaction adenosine(1518)/adenosine(1519) in 16S rRNA + 4 S-adenosyl-L-methionine = N(6)-dimethyladenosine(1518)/N(6)-dimethyladenosine(1519) in 16S rRNA + 4 S-adenosyl-L-homocysteine + 4 H(+). Functionally, specifically dimethylates two adjacent adenosines (A1518 and A1519) in the loop of a conserved hairpin near the 3'-end of 16S rRNA in the 30S particle. May play a critical role in biogenesis of 30S subunits. This is Ribosomal RNA small subunit methyltransferase A from Cytophaga hutchinsonii (strain ATCC 33406 / DSM 1761 / CIP 103989 / NBRC 15051 / NCIMB 9469 / D465).